The chain runs to 168 residues: Small ribosomal subunit protein uS5 (168 aa).

In terms of domain architecture, S5 DRBM spans 13 to 76 (LEENVVAINR…EDAKRKLITV (64 aa)).

Belongs to the universal ribosomal protein uS5 family. As to quaternary structure, part of the 30S ribosomal subunit. Contacts proteins S4 and S8.

Its function is as follows. With S4 and S12 plays an important role in translational accuracy. Located at the back of the 30S subunit body where it stabilizes the conformation of the head with respect to the body. The protein is Small ribosomal subunit protein uS5 of Leuconostoc mesenteroides subsp. mesenteroides (strain ATCC 8293 / DSM 20343 / BCRC 11652 / CCM 1803 / JCM 6124 / NCDO 523 / NBRC 100496 / NCIMB 8023 / NCTC 12954 / NRRL B-1118 / 37Y).